The primary structure comprises 136 residues: Aspartate 1-decarboxylase (136 aa).

The active-site Schiff-base intermediate with substrate; via pyruvic acid is the Ser-25. Residue Ser-25 is modified to Pyruvic acid (Ser). Substrate is bound at residue Thr-57. The Proton donor role is filled by Tyr-58. 73–75 serves as a coordination point for substrate; it reads GAA. The interval 117 to 136 is disordered; it reads IFQLGEETTPEEAPSLEQRN.

Belongs to the PanD family. Heterooctamer of four alpha and four beta subunits. Requires pyruvate as cofactor. In terms of processing, is synthesized initially as an inactive proenzyme, which is activated by self-cleavage at a specific serine bond to produce a beta-subunit with a hydroxyl group at its C-terminus and an alpha-subunit with a pyruvoyl group at its N-terminus.

Its subcellular location is the cytoplasm. The catalysed reaction is L-aspartate + H(+) = beta-alanine + CO2. The protein operates within cofactor biosynthesis; (R)-pantothenate biosynthesis; beta-alanine from L-aspartate: step 1/1. Functionally, catalyzes the pyruvoyl-dependent decarboxylation of aspartate to produce beta-alanine. In Chloroherpeton thalassium (strain ATCC 35110 / GB-78), this protein is Aspartate 1-decarboxylase.